The primary structure comprises 1446 residues: Bud site selection protein 4 (1446 aa).

Disordered stretches follow at residues 69-103, 358-385, 425-446, 495-525, 823-844, and 1025-1044; these read NQWN…TNLL, VSEE…NPSS, DNNI…SGKE, ASED…QNLE, SSSL…SQAF, and KKNT…RVSS. Residues 86–98 show a composition bias toward acidic residues; it reads NYDDDEEQGDESD. Polar residues-rich tracts occupy residues 425 to 434 and 495 to 524; these read DNNISKSAND and ASED…QQNL. Residues 1028-1044 show a composition bias toward basic and acidic residues; that stretch reads TQKDLKDGTTAEKRVSS. The PH domain occupies 1314 to 1425; it reads DITKEGYLLQ…WYMKLKEVVE (112 aa).

The protein belongs to the BUD4 family.

It is found in the bud neck. In terms of biological role, required for selection of future bud sites. Cooperates with other bud site selection proteins to recognize a spatial landmark during mitosis and they subsequently become a landmark for downstream polarity establishment factors that coordinate budding and cytokinesis. Involved in the septin organization at the bud neck. The protein is Bud site selection protein 4 (BUD4) of Candida glabrata (strain ATCC 2001 / BCRC 20586 / JCM 3761 / NBRC 0622 / NRRL Y-65 / CBS 138) (Yeast).